Here is a 1099-residue protein sequence, read N- to C-terminus: Contactin-5 (1099 aa).

An N-terminal signal peptide occupies residues 1–18 (MASSWRLILFLSFTSCLS). 6 Ig-like C2-type domains span residues 99 to 190 (PVFV…ATLQ), 196 to 282 (NFSG…RVLS), 300 to 385 (PKIE…GQLQ), 390 to 474 (PHWV…AELK), 480 to 569 (PSFE…VSVK), and 571 to 660 (PTRI…DSVS). Cys123 and Cys173 form a disulfide bridge. N-linked (GlcNAc...) asparagine glycans are attached at residues Asn138 and Asn196. Intrachain disulfides connect Cys217–Cys269 and Cys322–Cys369. N-linked (GlcNAc...) asparagine glycans are attached at residues Asn397, Asn449, and Asn540. 3 disulfide bridges follow: Cys411-Cys458, Cys503-Cys551, and Cys593-Cys650. Fibronectin type-III domains are found at residues 673-771 (PPGV…TNEA), 776-873 (APSN…SAEG), 878-972 (APTD…TKRH), and 977-1067 (PPGN…SYAG). 3 N-linked (GlcNAc...) asparagine glycosylation sites follow: Asn779, Asn816, and Asn931. The segment at 958–983 (YGPPSREVSATTKRHPPSEPPGNLRW) is disordered. N-linked (GlcNAc...) asparagine glycosylation is present at Asn1002. Ser1072 is lipidated: GPI-anchor amidated serine. The propeptide at 1073–1099 (AQSTLHSLSKWSSVTLLLALMLPSSSW) is removed in mature form.

This sequence belongs to the immunoglobulin superfamily. Contactin family. Interacts with PTPRG. In terms of tissue distribution, specifically expressed in the nervous system. Expressed in cerebrum and cerebellum but at low level in spinal cord. In brain, it is expressed in highly restricted regions at postnatal day 7, such as the auditory pathway, including the cochlear nucleus, superior olive, inferior colliculus, medial geniculate nucleus and auditory cortex. Expressed in the accessory olfactory bulb, glomerular and mitral cell layers in the olfactory bulb, anterior thalamic nuclei, layers II-IV of the cerebral cortex, dentate gyrus of the hippocampus and external granule cells and Purkinje cells of the cerebellum. Also expressed in the piriform cortex, inferior olive and facial nucleus. Weakly or not expressed in other parts of the brain.

The protein resides in the cell membrane. Contactins mediate cell surface interactions during nervous system development. Has some neurite outgrowth-promoting activity in the cerebral cortical neurons but not in hippocampal neurons. Probably involved in neuronal activity in the auditory system. This chain is Contactin-5 (Cntn5), found in Rattus norvegicus (Rat).